The chain runs to 347 residues: Probable RNA methyltransferase azo0122 (347 aa).

E89 functions as the Proton acceptor in the catalytic mechanism. In terms of domain architecture, Radical SAM core spans L92–D318. Cysteines 99 and 323 form a disulfide. Residues C106, C110, and C113 each contribute to the [4Fe-4S] cluster site. S-adenosyl-L-methionine-binding positions include G151–E152, S181, S204–H206, and N280. The S-methylcysteine intermediate role is filled by C323.

The protein belongs to the radical SAM superfamily. RlmN family. [4Fe-4S] cluster serves as cofactor.

Its subcellular location is the cytoplasm. This Azoarcus sp. (strain BH72) protein is Probable RNA methyltransferase azo0122.